Reading from the N-terminus, the 140-residue chain is 3-hydroxyacyl-[acyl-carrier-protein] dehydratase FabZ (140 aa).

The active site involves His47.

Belongs to the thioester dehydratase family. FabZ subfamily.

Its subcellular location is the cytoplasm. It carries out the reaction a (3R)-hydroxyacyl-[ACP] = a (2E)-enoyl-[ACP] + H2O. Involved in unsaturated fatty acids biosynthesis. Catalyzes the dehydration of short chain beta-hydroxyacyl-ACPs and long chain saturated and unsaturated beta-hydroxyacyl-ACPs. The protein is 3-hydroxyacyl-[acyl-carrier-protein] dehydratase FabZ of Streptococcus suis (strain 98HAH33).